The chain runs to 456 residues: Outer membrane protein assembly factor BamB (456 aa).

A signal peptide spans 1–19 (MKKLLFITAPLLLSVLTAS). Cys20 carries the N-palmitoyl cysteine lipid modification. Cys20 carries the S-diacylglycerol cysteine lipid modification.

The protein belongs to the BamB family. As to quaternary structure, part of the Bam complex.

Its subcellular location is the cell outer membrane. Functionally, part of the outer membrane protein assembly complex, which is involved in assembly and insertion of beta-barrel proteins into the outer membrane. The sequence is that of Outer membrane protein assembly factor BamB from Francisella tularensis subsp. tularensis (strain SCHU S4 / Schu 4).